We begin with the raw amino-acid sequence, 287 residues long: Cyclopropane mycolic acid synthase MmaA2 (287 aa).

Residues 33 to 34 (YS), 72 to 74 (GCG), 94 to 99 (TLSKNQ), 123 to 124 (WE), and Ile136 each bind S-adenosyl-L-methionine. Cys269 is a catalytic residue.

The protein belongs to the CFA/CMAS family.

The enzyme catalyses a 1-acyl-2-(9Z)-enoyl-sn-glycero-3-phospholipid + S-adenosyl-L-methionine = a 1-acyl-2-(9-cyclopronane)-acyl-sn-glycero-3-phospholipid + S-adenosyl-L-homocysteine + H(+). The protein operates within lipid metabolism; mycolic acid biosynthesis. In terms of biological role, catalyzes the conversion of a double bond to a cis cyclopropane ring at the distal position of an alpha mycolic acid via the transfer of a methylene group from S-adenosyl-L-methionine. MmaA2 also catalyzes the biosynthesis of the cis-cyclopropanated methoxymycolates. Cyclopropanated mycolic acids are key factors participating in cell envelope permeability, host immunomodulation and persistence. The protein is Cyclopropane mycolic acid synthase MmaA2 (mmaA2) of Mycobacterium tuberculosis (strain ATCC 25177 / H37Ra).